We begin with the raw amino-acid sequence, 205 residues long: MSGAQRGQRGGERRGGRDDRRGQGADKTAYIERVVAINRVAKVVKGGRRFSFTALVVVGDGEGLVGVGYGKAKEVPAAIAKGVEEAKKHFFRVPRIQGTIPHPVQGEKAAGVVLLRPAAPGTGVIAGGPVRAVLECAGIHDVLSKSLGSSNQINIVHATVEALRMLEQPEAVAARRGLPVEEVAPAALLKARVEVPAGVSEEVSS.

The tract at residues 1–25 (MSGAQRGQRGGERRGGRDDRRGQGA) is disordered. Basic and acidic residues predominate over residues 9 to 24 (RGGERRGGRDDRRGQG). One can recognise an S5 DRBM domain in the interval 30-93 (YIERVVAINR…EEAKKHFFRV (64 aa)).

This sequence belongs to the universal ribosomal protein uS5 family. As to quaternary structure, part of the 30S ribosomal subunit. Contacts proteins S4 and S8.

Functionally, with S4 and S12 plays an important role in translational accuracy. In terms of biological role, located at the back of the 30S subunit body where it stabilizes the conformation of the head with respect to the body. This chain is Small ribosomal subunit protein uS5, found in Nocardioides sp. (strain ATCC BAA-499 / JS614).